A 599-amino-acid polypeptide reads, in one-letter code: Elongation factor 4 (599 aa).

The 183-residue stretch at 4 to 186 (KFIRNFSIIA…AIIKHVPPPL (183 aa)) folds into the tr-type G domain. GTP is bound by residues 16–21 (DHGKST) and 133–136 (NKID).

The protein belongs to the TRAFAC class translation factor GTPase superfamily. Classic translation factor GTPase family. LepA subfamily.

It is found in the cell membrane. The catalysed reaction is GTP + H2O = GDP + phosphate + H(+). In terms of biological role, required for accurate and efficient protein synthesis under certain stress conditions. May act as a fidelity factor of the translation reaction, by catalyzing a one-codon backward translocation of tRNAs on improperly translocated ribosomes. Back-translocation proceeds from a post-translocation (POST) complex to a pre-translocation (PRE) complex, thus giving elongation factor G a second chance to translocate the tRNAs correctly. Binds to ribosomes in a GTP-dependent manner. In Ureaplasma urealyticum serovar 10 (strain ATCC 33699 / Western), this protein is Elongation factor 4.